Consider the following 152-residue polypeptide: Transcriptional regulator MraZ (152 aa).

SpoVT-AbrB domains lie at 5 to 52 (LNPI…THPQ) and 81 to 124 (ATEV…GKSQ).

It belongs to the MraZ family. As to quaternary structure, forms oligomers.

It localises to the cytoplasm. Its subcellular location is the nucleoid. This chain is Transcriptional regulator MraZ, found in Coxiella burnetii (strain Dugway 5J108-111).